A 63-amino-acid chain; its full sequence is Large ribosomal subunit protein bL35 (63 aa).

It belongs to the bacterial ribosomal protein bL35 family.

The sequence is that of Large ribosomal subunit protein bL35 from Campylobacter hominis (strain ATCC BAA-381 / DSM 21671 / CCUG 45161 / LMG 19568 / NCTC 13146 / CH001A).